The following is a 388-amino-acid chain: Protein-glutamate methylesterase/protein-glutamine glutaminase (388 aa).

Positions 20-138 (RVMVVDDSVV…ESAGAEVFRH (119 aa)) constitute a Response regulatory domain. Aspartate 71 is modified (4-aspartylphosphate). Residues 193–386 (PTAPRVLLIG…PKLVRLFSGD (194 aa)) enclose the CheB-type methylesterase domain. Catalysis depends on residues serine 204, histidine 232, and aspartate 328.

The protein belongs to the CheB family. Phosphorylated by CheA. Phosphorylation of the N-terminal regulatory domain activates the methylesterase activity.

It is found in the cytoplasm. The catalysed reaction is [protein]-L-glutamate 5-O-methyl ester + H2O = L-glutamyl-[protein] + methanol + H(+). It catalyses the reaction L-glutaminyl-[protein] + H2O = L-glutamyl-[protein] + NH4(+). Functionally, involved in chemotaxis. Part of a chemotaxis signal transduction system that modulates chemotaxis in response to various stimuli. Catalyzes the demethylation of specific methylglutamate residues introduced into the chemoreceptors (methyl-accepting chemotaxis proteins or MCP) by CheR. Also mediates the irreversible deamidation of specific glutamine residues to glutamic acid. This is Protein-glutamate methylesterase/protein-glutamine glutaminase from Rhodopseudomonas palustris (strain HaA2).